The following is a 947-amino-acid chain: Pyruvate, phosphate dikinase 1, chloroplastic (947 aa).

The transit peptide at 1-62 directs the protein to the chloroplast; sequence MAASVSRAIC…GRGQHCSPLR (62 aa). The segment at 21 to 54 is disordered; that stretch reads DREATSFARRSVAAPRPPHAKAAGVIRSDSGAGR. The residue at position 63 (Ala-63) is an N-acetylalanine; partial. Thr-309 carries the post-translational modification Phosphothreonine. A Phosphoserine modification is found at Ser-506. Thr-527 carries the phosphothreonine; by PDRP1 modification. At Ser-528 the chain carries Phosphoserine; by PDRP1. Residue His-529 is the Tele-phosphohistidine intermediate of the active site. Arg-635, Arg-692, Glu-821, Gly-842, Thr-843, Asn-844, and Asp-845 together coordinate substrate. Glu-821 contributes to the Mg(2+) binding site. Asp-845 contacts Mg(2+). Cys-907 serves as the catalytic Proton donor.

The protein belongs to the PEP-utilizing enzyme family. In terms of assembly, homotetramer. Requires Mg(2+) as cofactor. In terms of processing, phosphorylation of Thr-527 in the dark inactivates the enzyme, dephosphorylation upon light stimulation reactivates the enzyme. More highly phosphorylated when grown under high rather than low light regimes (70 vs 900 umol photons/m-2/s). the degree of phosphorylation is strictly regulated by light intensity and the light/dark transition has no influence. Phosphorylated in both mesophyll and bundle sheath cells. The phosphorylation at Ser-528 may be important for the phosphorylation at Thr-527 and may also be regulated by light intensity. Isoform C4PPDKZM1 mainly localized in mesophyll cells and only a low level is found in bundle sheath cells. Isoform CYPPDKZM1 expressed in roots, stems and etiolated leaves.

It is found in the plastid. Its subcellular location is the chloroplast. The protein resides in the cytoplasm. The enzyme catalyses pyruvate + phosphate + ATP = phosphoenolpyruvate + AMP + diphosphate + H(+). It functions in the pathway photosynthesis; C4 acid pathway. Its activity is regulated as follows. Activated by light-induced dephosphorylation. Inhibited by dark-induced phosphorylation. Both reactions are catalyzed by PDRP1. Inactivated by cold due to the dissociation of the homotetramer. Independent of circadian regulation. Its function is as follows. Formation of phosphoenolpyruvate, which is the primary acceptor of CO(2) in C4 and some Crassulacean acid metabolism plants. The chain is Pyruvate, phosphate dikinase 1, chloroplastic from Zea mays (Maize).